The primary structure comprises 305 residues: Dihydroorotate dehydrogenase B (NAD(+)), catalytic subunit (305 aa).

Residues Ser23 and 47–48 (KG) contribute to the FMN site. Substrate is bound by residues Lys47 and 71–75 (NAIGL). Residues Asn101 and Asn129 each coordinate FMN. Residue Asn129 coordinates substrate. The active-site Nucleophile is Cys132. Residues Lys167 and Ile193 each contribute to the FMN site. Residue 194-195 (NT) coordinates substrate. Residues Gly219, 245–246 (GG), and 267–268 (GT) contribute to the FMN site.

Belongs to the dihydroorotate dehydrogenase family. Type 1 subfamily. As to quaternary structure, heterotetramer of 2 PyrK and 2 PyrD type B subunits. Requires FMN as cofactor.

It localises to the cytoplasm. The enzyme catalyses (S)-dihydroorotate + NAD(+) = orotate + NADH + H(+). The protein operates within pyrimidine metabolism; UMP biosynthesis via de novo pathway; orotate from (S)-dihydroorotate (NAD(+) route): step 1/1. Its function is as follows. Catalyzes the conversion of dihydroorotate to orotate with NAD(+) as electron acceptor. The protein is Dihydroorotate dehydrogenase B (NAD(+)), catalytic subunit (pyrD) of Geobacter sulfurreducens (strain ATCC 51573 / DSM 12127 / PCA).